The sequence spans 990 residues: Fibronectin-binding protein A (990 aa).

A signal peptide spans 1 to 35 (MKNNLRYGIRKHKLGAASVFLGTMIVVGMGQDKEA). The YSIRK-G/S signaling motif signature appears at 7–18 (YGIRKHKLGAAS). Disordered regions lie at residues 33–61 (KEAA…SETQ) and 96–193 (PKAV…TEVK). Positions 37 to 55 (TSEQKTTTVEENGNSATDN) are enriched in polar residues. Positions 37-511 (TSEQKTTTVE…SNKADGNGKN (475 aa)) are ligand-binding A region. 2 stretches are compositionally biased toward basic and acidic residues: residues 112 to 126 (TVKE…KPQV) and 179 to 193 (DVAE…TEVK). Residues 194-511 (GTDVTSKVTV…SNKADGNGKN (318 aa)) are fibrinogen/elastin/tropoelastin-binding. The tract at residues 512 to 834 (GQIIQNNDFE…EGQQTIEEDT (323 aa)) is fibronectin-binding. One copy of the B-1 repeat lies at 545–574 (ENQDNTPLDIDYHTAIDGEGGYADGYIETI). A 2 X approximate tandem repeats region spans residues 545–604 (ENQDNTPLDIDYHTAIDGEGGYADGYIETIEETDSSAIDIDYHTAVDSEAGHVGGYTESS). One copy of the B-2 repeat lies at 575 to 604 (EETDSSAIDIDYHTAVDSEAGHVGGYTESS). A disordered region spans residues 702-969 (LGYEGGQNSG…EESTNKGMLF (268 aa)). Residues 707–744 (GQNSGNQSFEEDTEEDKPKYEQGGNIVDIDFDSVPQIQ) form a D-1 repeat. The tract at residues 707 to 850 (GQNSGNQSFE…TPEVPSEPET (144 aa)) is 4 X approximate tandem repeats. Over residues 741-752 (PQIQGQNNGNQS) the composition is skewed to polar residues. One copy of the D-2 repeat lies at 745 to 782 (GQNNGNQSFEEDTEKDKPKYEQGGNIIDIDFDSVPQIH). The D-3 repeat unit spans residues 783–821 (GFNKHNEIIEEDTNKDKPNYQFGGHNSVDFEEDTLPKVS). Over residues 786 to 800 (KHNEIIEEDTNKDKP) the composition is skewed to basic and acidic residues. A D-4; truncated repeat occupies 822–850 (GQNEGQQTIEEDTTPPTPPTPEVPSEPET). Pro residues predominate over residues 836 to 910 (PPTPPTPEVP…PAEPGKPVPP (75 aa)). WR repeat units follow at residues 851–864 (PTPP…EPET), 865–878 (PTPP…EPET), 879–892 (PTPP…EPET), 893–906 (PTPP…EPGK), and 907–920 (PVPP…KPSK). The segment at 851-920 (PTPPTPEVPS…AEEEPKKPSK (70 aa)) is 5 X tandem repeats, Pro-rich (WR). The short motif at 954-958 (LPETG) is the LPXTG sorting signal element. Thr-957 bears the Pentaglycyl murein peptidoglycan amidated threonine mark. Positions 958 to 990 (GGEESTNKGMLFGGLFSILGLALLRRNKKNHKA) are cleaved as a propeptide — removed by sortase.

The protein resides in the secreted. The protein localises to the cell wall. In terms of biological role, promotes bacterial attachment to multiple substrates, such as fibronectin (Fn), fibrinogen (Fg), elastin peptides and tropoelastin. This confers to S.aureus the ability to invade endothelial cells. Promotes adherence to and aggregation of activated platelets. The sequence is that of Fibronectin-binding protein A (fnbA) from Staphylococcus aureus (strain bovine RF122 / ET3-1).